Here is a 713-residue protein sequence, read N- to C-terminus: MATYLIEVGTEELPADFVAAAIAQLKDRVSHSLTEYFLTPDGIEVYGTPRRLAVLIQGLPDQQADREEEIKGPPAAAAFKEGQPTKAAEGFARKQGVELSALEVRPTEKGDFVFVQKKTLGRPTPEILQELVLGWFTALEGRRFMRWADGDLRFPRPIRWLVSLWNDAVLPLELVNGSGKLEAGRISRGHRILHQGDVTLNNAADYVVTLQQAFVEVNPQVREEKIVAGVKAAAAEIGGEAEMPADLLAEVVNLVEYPTAVVGDIEAEFLELPTEVITTVMVTHQRYFAVRDRQDKTKLLPKFITISNGDPKKSEIIAAGNGRVIRARLADGQFFYRADCDEHLETYLPQLEAVTFQEELGTMRDKVDRIMEISQQIAEQLGLSEADKEIIASTAMLCKADLVTQMVYEFPELQGIMGQKYALVSGEAPAVAEGIFEHYLPRNADDILPQTLAGQVVGMGDRLDTLVSIFGLGMIPSGSSDPFALRRAANAIITVAWDAGLEIDLGELLAQGAKDFVTAHPDKTSPLEALQSFFIQRIQTLLQDEKGIDYDLVNAVLGDDAEYTERALTDLLDVGDRAAFLQSIRDDGQLAKIYATVNRSAKLAAKGNLSTDSLDPTGVINPEKFAQNSERDLYAGLVELVPTTEVARTERDYQKLIDGLAALAPTVERFFDGEDSVLVMAEDPAVRENRLNLLGLLRNHARVLADFGAIVKQ.

It belongs to the class-II aminoacyl-tRNA synthetase family. In terms of assembly, tetramer of two alpha and two beta subunits.

Its subcellular location is the cytoplasm. The enzyme catalyses tRNA(Gly) + glycine + ATP = glycyl-tRNA(Gly) + AMP + diphosphate. The chain is Glycine--tRNA ligase beta subunit from Picosynechococcus sp. (strain ATCC 27264 / PCC 7002 / PR-6) (Agmenellum quadruplicatum).